The following is a 1131-amino-acid chain: Protein DWARF 53 (1131 aa).

The Clp R domain occupies 8–181; sequence ARQCLSPAAV…KLAILRPAPP (174 aa). Repeat regions lie at residues 12 to 85 and 103 to 181; these read LSPA…LDRL and VSNS…PAPP. The segment at 511–574 is disordered; that stretch reads NRDPYKPFPR…ISSPSVTNKR (64 aa). Residues 558-569 are compositionally biased toward low complexity; the sequence is SSSTARPISSPS. Positions 578-582 match the EAR 1 motif; sequence LVLNL. Residues 588-655 are disordered; sequence KSDENLQERG…KRVEDSERSV (68 aa). Residues 597 to 609 show a composition bias toward polar residues; that stretch reads GMQSQHGTLSNVD. Over residues 646–655 the composition is skewed to basic and acidic residues; it reads KRVEDSERSV. The EAR 2 signature appears at 799-803; sequence LDLNL. Disordered stretches follow at residues 951–970 and 976–1002; these read ISDD…RLHR and FDLN…NSYG. An EAR 3 motif is present at residues 976 to 981; that stretch reads FDLNLP. A compositionally biased stretch (acidic residues) spans 982–993; the sequence is VDEDEPLDADDD.

This sequence belongs to the ClpA/ClpB family. In terms of assembly, interacts with D3. Interacts with D14. The interaction with D14 is enhanced in the presence of strigolactones. The interaction with D14 occurs in the presence of (2'R) stereoisomers of strigolactones, but not (2'S) stereoisomers. Interacts with the TOPLESS-related proteins TPR1, TPR2 and TPR3. Interacts with SPL14/IPA1. In terms of processing, polyubiquitinated. Strigolactone, but not karrikin, triggers rapid SCF(D3)-dependent degradation via the proteasome. In terms of tissue distribution, expressed in the shoot bases of seedlings, young leaves, axillary buds and young panicles. Expressed in young roots vasculature, culms, internodes and nodes, preferentially in the parenchyma cells surrounding the xylem.

The protein resides in the nucleus. Functionally, repressor of strigolactones (SL) signaling. Subjected to a negative feedback control of SL signaling. Suppresses the transcriptional activation activity of SPL14/IPA1 in SL signaling. Acts with SPL14/IPA1 to mediate the SL-regulated tiller development. Subject to a negative feedback regulation by SPL14/IPA1, which binds to D53 promoter to repress D53 gene expression. This Oryza sativa subsp. japonica (Rice) protein is Protein DWARF 53.